A 255-amino-acid polypeptide reads, in one-letter code: Tabinhibitin 7 (255 aa).

Positions 1-23 (MTSILVSSFLLATLVLQYATIDA) are cleaved as a signal peptide. Positions 32 to 34 (RGD) match the Cell attachment site motif. Residues 67–211 (LSKINDVRDH…KARALLTCNF (145 aa)) enclose the SCP domain.

This sequence belongs to the CRISP family. Expressed in salivary glands.

The protein localises to the secreted. Inhibits platelet aggregation induced by all agonists tested (ADP, arachidonic acid, the thromboxane A2 analog U46619, thrombin, and snake venom snaclecs (TMVA that activates platelet through GPIB, and stejnulxin that specifically acts through GPVI (GP6))). May act by competing with fibrinogen for binding to glycoprotein IIb/IIIa (ITGA2B/ITGB3). The polypeptide is Tabinhibitin 7 (Tabanus yao (Horsefly)).